Here is a 281-residue protein sequence, read N- to C-terminus: Trypsin zeta (281 aa).

The N-terminal stretch at 1–23 (MSSSSWLGCLLAVLLSALALSQG) is a signal peptide. A propeptide spans 24-39 (LPLLEDLDENSFPDGR) (activation peptide). One can recognise a Peptidase S1 domain in the interval 40–279 (IVGGYVTDIA…LRPWIDAVRA (240 aa)). An intrachain disulfide couples C73 to C89. Active-site charge relay system residues include H88 and D135. 2 disulfide bridges follow: C199-C219 and C231-C255. S235 acts as the Charge relay system in catalysis.

It belongs to the peptidase S1 family.

The protein localises to the secreted. It is found in the extracellular space. It carries out the reaction Preferential cleavage: Arg-|-Xaa, Lys-|-Xaa.. The chain is Trypsin zeta (zetaTry) from Drosophila erecta (Fruit fly).